A 350-amino-acid polypeptide reads, in one-letter code: Fe(3+) ions import ATP-binding protein FbpC (350 aa).

The ABC transporter domain occupies 4–236; the sequence is LDIINLSKSF…PNDEQTAHFL (233 aa). ATP is bound at residue 36–43; that stretch reads GPSGSGKT.

This sequence belongs to the ABC transporter superfamily. Fe(3+) ion importer (TC 3.A.1.10) family. In terms of assembly, the complex is composed of two ATP-binding proteins (FbpC), two transmembrane proteins (FbpB) and a solute-binding protein (FbpA).

Its subcellular location is the cell inner membrane. The enzyme catalyses Fe(3+)(out) + ATP + H2O = Fe(3+)(in) + ADP + phosphate + H(+). In terms of biological role, part of the ABC transporter complex FbpABC involved in Fe(3+) ions import. Responsible for energy coupling to the transport system. The polypeptide is Fe(3+) ions import ATP-binding protein FbpC (Pseudomonas fluorescens (strain Pf0-1)).